Here is a 688-residue protein sequence, read N- to C-terminus: Glycine--tRNA ligase beta subunit (688 aa).

The protein belongs to the class-II aminoacyl-tRNA synthetase family. In terms of assembly, tetramer of two alpha and two beta subunits.

Its subcellular location is the cytoplasm. The catalysed reaction is tRNA(Gly) + glycine + ATP = glycyl-tRNA(Gly) + AMP + diphosphate. The sequence is that of Glycine--tRNA ligase beta subunit from Listeria monocytogenes serovar 1/2a (strain ATCC BAA-679 / EGD-e).